The following is a 605-amino-acid chain: Sodium-independent sulfate anion transporter (605 aa).

Over 1–50 (MPSSLKGLGQAWLSSSSMALSACCSVSAWQKRLPVLAWLPRYSLQWLKMD) the chain is Extracellular. The helical transmembrane segment at 51-71 (FIAGLSVGLTVIPQALAYAEV) threads the bilayer. A72 is a topological domain (cytoplasmic). The helical transmembrane segment at 73–93 (GLPPQYGLYSAFTGCFVYVFL) threads the bilayer. Residues 94–98 (GTSRD) are Extracellular-facing. The helical transmembrane segment at 99–119 (VTLGPTAIMSLLVSFYTFHEP) threads the bilayer. Residues 120–122 (AYA) lie on the Cytoplasmic side of the membrane. Residues 123–143 (VLLTFLSGCIQLAMGLLHLGF) traverse the membrane as a helical segment. Over 144–146 (LLD) the chain is Extracellular. Residues 147–167 (FISCPVIKGFTSAAAIIIGFG) form a helical membrane-spanning segment. At 168–196 (QIKNLLGLHNIPRQFFLQVYHTFLSVGET) the chain is on the cytoplasmic side. A helical membrane pass occupies residues 197–217 (RLGDAILGLVCMVLLLVLKLM). At 218–249 (RDRIPPVHPEMPLCVRLSCGLVWTTATARNAL) the chain is on the extracellular side. The helical transmembrane segment at 250–270 (VVSFAALVAYSFEVTGYQPFI) threads the bilayer. Residues 271-303 (LTGEIAKGLPPVRVPPFSVTMANGTVSFTRMVQ) lie on the Cytoplasmic side of the membrane. Residues 304–324 (DLGAGLAVVPLIGLLESIAVA) traverse the membrane as a helical segment. Residues 325 to 340 (KAFASQNDYHVDANQE) are Extracellular-facing. A helical transmembrane segment spans residues 341–361 (LLAIGLTNMLGSFVSSYPITG). Residues 362–373 (SFGRTAVNAQSG) lie on the Cytoplasmic side of the membrane. A helical transmembrane segment spans residues 374 to 394 (VCTPAGGLVTGALVLLSLDYL). The Extracellular portion of the chain corresponds to 395–397 (TSL). A helical membrane pass occupies residues 398–418 (FYYIPKAALAAVIIMAVVPLF). The Cytoplasmic portion of the chain corresponds to 419–447 (DTKIFGMLWRVKRLDLLPLCATFLLCFWE). The helical transmembrane segment at 448–468 (VQYGILAGTLVSTLFLLHFVA) threads the bilayer. At 469-605 (RPKTQVSEGP…PEHKVTLLTA (137 aa)) the chain is on the extracellular side. The region spanning 479–582 (VLILQLASGL…EKAEQYVRQE (104 aa)) is the STAS domain.

This sequence belongs to the SLC26A/SulP transporter (TC 2.A.53) family.

The protein localises to the cell membrane. It is found in the lysosome membrane. It localises to the apical cell membrane. The protein resides in the basolateral cell membrane. It carries out the reaction hydrogencarbonate(in) + chloride(out) = hydrogencarbonate(out) + chloride(in). It catalyses the reaction sulfate(in) + H(+)(in) = sulfate(out) + H(+)(out). The enzyme catalyses oxalate(in) + chloride(out) = oxalate(out) + chloride(in). In terms of biological role, sodium-independent anion exchanger mediating bicarbonate, chloride, sulfate and oxalate transport. Exhibits sodium-independent sulfate anion transporter activity that may cooperate with SLC26A2 to mediate DIDS-sensitive sulfate uptake into high endothelial venules endothelial cells (HEVEC). In the kidney, mediates chloride-bicarbonate exchange, facilitating V-ATPase-mediated acid secretion. May function as a chloride channel, playing an important role in moderating chloride homeostasis and neuronal activity in the cerebellum. The chain is Sodium-independent sulfate anion transporter (Slc26a11) from Cavia porcellus (Guinea pig).